Here is a 347-residue protein sequence, read N- to C-terminus: 5-formaminoimidazole-4-carboxamide-1-(beta)-D-ribofuranosyl 5'-monophosphate synthetase (347 aa).

Residues H23 and S91 each contribute to the 5-amino-1-(5-phospho-beta-D-ribosyl)imidazole-4-carboxamide site. The 212-residue stretch at 112 to 323 (RKILLWESDQ…YSYLYWDEPM (212 aa)) folds into the ATP-grasp domain. Residues 142-196 (PDEV…VPAY) and E218 contribute to the ATP site. N244 contacts 5-amino-1-(5-phospho-beta-D-ribosyl)imidazole-4-carboxamide. Mg(2+) is bound by residues E283 and E296.

This sequence belongs to the phosphohexose mutase family. The cofactor is Mg(2+). It depends on Mn(2+) as a cofactor.

The enzyme catalyses 5-amino-1-(5-phospho-beta-D-ribosyl)imidazole-4-carboxamide + formate + ATP = 5-formamido-1-(5-phospho-D-ribosyl)imidazole-4-carboxamide + ADP + phosphate. It participates in purine metabolism; IMP biosynthesis via de novo pathway; 5-formamido-1-(5-phospho-D-ribosyl)imidazole-4-carboxamide from 5-amino-1-(5-phospho-D-ribosyl)imidazole-4-carboxamide (formate route): step 1/1. Catalyzes the ATP- and formate-dependent formylation of 5-aminoimidazole-4-carboxamide-1-beta-d-ribofuranosyl 5'-monophosphate (AICAR) to 5-formaminoimidazole-4-carboxamide-1-beta-d-ribofuranosyl 5'-monophosphate (FAICAR) in the absence of folates. The chain is 5-formaminoimidazole-4-carboxamide-1-(beta)-D-ribofuranosyl 5'-monophosphate synthetase from Ignicoccus hospitalis (strain KIN4/I / DSM 18386 / JCM 14125).